Consider the following 417-residue polypeptide: Testis-specific Y-encoded-like protein 5 (417 aa).

The segment covering 1 to 25 (MSGRSRGRKSSRAKNRGKGRAKARV) has biased composition (basic residues). 4 disordered regions span residues 1–55 (MSGR…QVQA), 93–112 (AAGD…AASL), 127–202 (GTVG…EGSM), and 391–417 (KGKE…SQSN). Basic and acidic residues predominate over residues 27–37 (PAPDDAPRDPD). A compositionally biased stretch (low complexity) spans 93–103 (AAGDHGQAAAR). Residues 182–191 (GEEKKEERDA) show a composition bias toward basic and acidic residues. Residues 406–417 (METTQPGVSQSN) are compositionally biased toward polar residues.

Belongs to the nucleosome assembly protein (NAP) family. Interacts with USP7.

Its function is as follows. Involved in modulation of cell growth and cellular response to gamma radiation probably via regulation of the Akt signaling pathway. Involved in regulation of p53/TP53. Suppresses p53/TP53 protein levels and promotes its ubiquitination; the function is dependent on USP7 and independent on MDM2. Proposed to displace p53/TP53 from interaction with USP7. This is Testis-specific Y-encoded-like protein 5 (TSPYL5) from Homo sapiens (Human).